A 314-amino-acid polypeptide reads, in one-letter code: Methylglutaconyl-CoA hydratase, mitochondrial (314 aa).

The N-terminal 42 residues, 1-42, are a transit peptide targeting the mitochondrion; that stretch reads MAAAAPGALGALRTGRVRLVAACCARLGPAAWARGTAPRRGY. Residue Lys75 is modified to N6-acetyllysine; alternate. Position 75 is an N6-succinyllysine; alternate (Lys75). The segment at 80-94 is RNA-binding; it reads KNLLKMLSKAVDALK. Lys84 is modified (N6-succinyllysine). N6-acetyllysine; alternate is present on residues Lys88 and Lys119. Lys88 and Lys119 each carry N6-succinyllysine; alternate. Lys123 and Lys135 each carry N6-succinyllysine. N6-acetyllysine; alternate occurs at positions 179 and 186. 2 positions are modified to N6-succinyllysine; alternate: Lys179 and Lys186. At Lys304 the chain carries N6-succinyllysine.

It belongs to the enoyl-CoA hydratase/isomerase family. Homohexamer. Detected in heart, brain, liver, spleen, skeletal muscle and kidney. Expressed in brain, kidney, liver and spleen tissue (at protein level).

It is found in the mitochondrion. It carries out the reaction (3S)-3-hydroxy-3-methylglutaryl-CoA = 3-methyl-(2E)-glutaconyl-CoA + H2O. It catalyses the reaction (3S)-citramalyl-CoA = itaconyl-CoA + H2O. The catalysed reaction is 3-hydroxyisovaleryl-CoA = 3-methylbut-2-enoyl-CoA + H2O. The enzyme catalyses (S)-3-hydroxyglutaryl-CoA = (2E)-glutaconyl-CoA + H2O. It participates in amino-acid degradation; L-leucine degradation; (S)-3-hydroxy-3-methylglutaryl-CoA from 3-isovaleryl-CoA: step 3/3. Functionally, catalyzes the fifth step in the leucine degradation pathway, the reversible hydration of 3-methylglutaconyl-CoA (3-MG-CoA) to 3-hydroxy-3-methylglutaryl-CoA (HMG-CoA). Can catalyze the reverse reaction but at a much lower rate in vitro. HMG-CoA is then quickly degraded by another enzyme (such as HMG-CoA lyase) to give acetyl-CoA and acetoacetate. Uses other substrates such as (2E)-glutaconyl-CoA efficiently in vitro, and to a lesser extent 3-methylcrotonyl-CoA (3-methyl-(2E)-butenoyl-CoA), crotonyl-CoA ((2E)-butenoyl-CoA) and 3-hydroxybutanoyl-CoA (the missing carboxylate reduces affinity to the active site). Originally it was identified as an RNA-binding protein as it binds to AU-rich elements (AREs) in vitro. AREs direct rapid RNA degradation and mRNA deadenylation. Might have itaconyl-CoA hydratase activity, converting itaconyl-CoA into citramalyl-CoA in the C5-dicarboxylate catabolism pathway. The C5-dicarboxylate catabolism pathway is required to detoxify itaconate, an antimicrobial metabolite and immunomodulator produced by macrophages during certain infections, that can act as a vitamin B12-poisoning metabolite. In Mus musculus (Mouse), this protein is Methylglutaconyl-CoA hydratase, mitochondrial (Auh).